The sequence spans 253 residues: Sulfate transporter CysZ (253 aa).

A run of 4 helical transmembrane segments spans residues 31 to 51 (FVIL…WWLF), 75 to 95 (LLWP…FSTI), 151 to 171 (IVLL…PVLW), and 222 to 242 (IPLL…AMWV).

The protein belongs to the CysZ family.

It is found in the cell inner membrane. Functionally, high affinity, high specificity proton-dependent sulfate transporter, which mediates sulfate uptake. Provides the sulfur source for the cysteine synthesis pathway. In Escherichia coli O139:H28 (strain E24377A / ETEC), this protein is Sulfate transporter CysZ.